A 1550-amino-acid chain; its full sequence is Adhesion G protein-coupled receptor L3 (1550 aa).

The signal sequence occupies residues 1–19 (MCPPQLFILMMLLAPVVHG). At 20–948 (GKHNERHPAL…VHDLLLDVIT (929 aa)) the chain is on the extracellular side. The tract at residues 34-80 (RHAEHSPGGPLPPRHLLQQPAAERSTAHRGQGPRGTARGVRGPGAPG) is disordered. Positions 103–192 (SCESYPIELR…KYLEVQYECV (90 aa)) constitute an SUEL-type lectin domain. 5 cysteine pairs are disulfide-bonded: C104–C134, C113–C191, C146–C178, C159–C165, and C203–C385. Residue N161 is glycosylated (N-linked (GlcNAc...) asparagine). In terms of domain architecture, Olfactomedin-like spans 202–461 (LCPGLLKGVY…VVKYSLDFGP (260 aa)). An interaction with FLRT3 region spans residues 317 to 347 (YHDTSPYRWGGKSDIDLAVDENGLWVIYATE). D332, N380, A381, and V435 together coordinate Ca(2+). A disordered region spans residues 518 to 538 (NLGRSTTPSLPGRRNRSTSTP). Residues N532, N616, N839, N884, and N910 are each glycosylated (N-linked (GlcNAc...) asparagine). Positions 755–934 (DIVRENTDNI…AVLMAHVEVK (180 aa)) constitute a GAIN-B domain. Disulfide bonds link C885–C916 and C904–C918. The tract at residues 885–934 (CSFWSYSKRTMTGYWSTQGCRLLTTNKTHTTCSCNHLTNFAVLMAHVEVK) is GPS. Positions 922 to 938 (TNFAVLMAHVEVKHSDA) are stachel. Residues 949-969 (WVGILLSLVCLLICIFTFCFF) form a helical membrane-spanning segment. At 970–977 (RGLQSDRN) the chain is on the cytoplasmic side. Residues 978-998 (TIHKNLCISLFVAELLFLIGI) traverse the membrane as a helical segment. The N-linked (GlcNAc...) asparagine glycan is linked to N999. Residues 999-1006 (NRTDQPIA) lie on the Extracellular side of the membrane. A helical membrane pass occupies residues 1007 to 1027 (CAVFAALLHFFFLAAFTWMFL). At 1028–1048 (EGVQLYIMLVEVFESEHSRRK) the chain is on the cytoplasmic side. A helical membrane pass occupies residues 1049–1069 (YFYLVGYGMPALIVAVSAAVD). Over 1070 to 1087 (YRSYGTDKVCWLRLDTYF) the chain is Extracellular. Residues 1088 to 1108 (IWSFIGPATLIIMLNVIFLGI) traverse the membrane as a helical segment. The Cytoplasmic segment spans residues 1109 to 1141 (ALYKMFHHTAILKPESGCLDNINYEDNRPFIKS). The chain crosses the membrane as a helical span at residues 1142 to 1162 (WVIGAIALLCLLGLTWAFGLM). The Extracellular portion of the chain corresponds to 1163–1168 (YINEST). The N-linked (GlcNAc...) asparagine glycan is linked to N1165. The chain crosses the membrane as a helical span at residues 1169-1189 (VIMAYLFTIFNSLQGMFIFIF). Residues 1190–1550 (HCVLQKKVRK…KGPAHLVTSL (361 aa)) are Cytoplasmic-facing. The disordered stretch occupies residues 1213–1236 (KSTESSIGSGKTSGSRTPGRYSTG). S1253 is modified (phosphoserine). Disordered stretches follow at residues 1410 to 1435 (LLPP…PQDH) and 1528 to 1550 (PPNK…VTSL). The residue at position 1535 (S1535) is a Phosphoserine. Residues 1545–1550 (HLVTSL) carry the PDZ-binding motif.

Belongs to the G-protein coupled receptor 2 family. LN-TM7 subfamily. As to quaternary structure, heterodimer of 2 chains generated by proteolytic processing; the large extracellular N-terminal fragment and the membrane-bound C-terminal fragment predominantly remain associated and non-covalently linked. Interacts (via olfactomedin-like domain) with FLRT1 (via extracellular domain). Interacts (via olfactomedin-like domain) with FLRT2 (via extracellular domain). Interacts (via olfactomedin-like domain) with FLRT3 (via extracellular domain); the interaction is direct. Interacts (via extracellular domain) with TENM1. Interacts (via extracellular domain) with TENM2. Interacts (via extracellular domain) with TENM3. Identified in a complex with FLRT3 and UNC5B; does not interact with UNC5B by itself. Identified in a complex with FLRT3 and UNC5D; does not interact with UNC5D by itself. Interacts (via PDZ-binding motif) with SHANK3. Interacts (via PDZ-binding motif) with DLG4. Autoproteolytically processed at the GPS region of the GAIN-B domain; this cleavage modulates receptor activity. Predominantly expressed in brain, followed by heart, placenta, pancreas, kidney and testis.

It localises to the cell membrane. Its subcellular location is the postsynaptic cell membrane. The protein resides in the cell projection. It is found in the axon. The protein localises to the cell junction. Its activity is regulated as follows. Forms a heterodimer of 2 chains generated by proteolytic processing that remain associated through non-covalent interactions mediated by the GAIN-B domain. In the inactivated receptor, the Stachel sequence (also named stalk) is embedded in the GAIN-B domain, where it adopts a beta-strand conformation. On activation, the Stachel moves into the 7 transmembrane region and adopts a twisted hook-shaped configuration that forms contacts within the receptor, leading to coupling of a G-alpha protein, which activates signaling. The cleaved GAIN-B and N-terminal domains can then dissociate from the rest of the receptor. Functionally, orphan adhesion G-protein coupled receptor (aGPCR), which mediates synapse specificity. Ligand binding causes a conformation change that triggers signaling via guanine nucleotide-binding proteins (G proteins) and modulates the activity of downstream effectors. ADGRL3 is coupled with different classes of G alpha proteins, such as G(12)/G(13), G(s), G(i) or G(q), depending on the context. Coupling to G(12)/G(13) G proteins, which mediates the activation Rho small GTPases is the most efficient. Following G-protein coupled receptor activation, associates with cell adhesion molecules that are expressed at the surface of adjacent cells to direct synapse specificity. Specifically mediates the establishment of Schaffer-collateral synapses formed by CA3-region axons on CA1-region pyramidal neurons in the hippocampus. Localizes to postsynaptic spines in excitatory synapses in the S.oriens and S.radiatum and interacts with presynaptic cell adhesion molecules FLRT3 and TENM2, promoting synapse formation. Plays a role in the development of glutamatergic synapses in the cortex. Important in determining the connectivity rates between the principal neurons in the cortex. Its function is as follows. Orphan adhesion G-protein coupled receptor (aGPCR), which mediates synapse specificity. Ligand binding causes a conformation change that triggers signaling via guanine nucleotide-binding proteins (G proteins) and modulates the activity of downstream effectors, such as adenylate cyclase. Isoform 1 is specifically coupled to G(s) G proteins and mediates activation of adenylate cyclase activity. Following G-protein coupled receptor activation, undergoes liquid-liquid phase transition, associates with (1) cell adhesion molecules that are expressed at the surface of adjacent cells, as well as (2) PDZ-containing proteins, such as SHANK3 and DLG4, in the cytoplasm to direct synapse formation. This chain is Adhesion G protein-coupled receptor L3, found in Rattus norvegicus (Rat).